A 332-amino-acid polypeptide reads, in one-letter code: Glycerol-3-phosphate dehydrogenase [NAD(P)+] (332 aa).

Ser-11, Phe-12, Lys-32, and Lys-106 together coordinate NADPH. 3 residues coordinate sn-glycerol 3-phosphate: Lys-106, Gly-137, and Ser-139. Position 141 (Ala-141) interacts with NADPH. Lys-192, Asp-245, Ser-255, Arg-256, and Asn-257 together coordinate sn-glycerol 3-phosphate. Lys-192 (proton acceptor) is an active-site residue. Arg-256 contributes to the NADPH binding site. Residues Val-280 and Glu-282 each coordinate NADPH.

This sequence belongs to the NAD-dependent glycerol-3-phosphate dehydrogenase family.

The protein resides in the cytoplasm. It carries out the reaction sn-glycerol 3-phosphate + NAD(+) = dihydroxyacetone phosphate + NADH + H(+). It catalyses the reaction sn-glycerol 3-phosphate + NADP(+) = dihydroxyacetone phosphate + NADPH + H(+). The protein operates within membrane lipid metabolism; glycerophospholipid metabolism. Functionally, catalyzes the reduction of the glycolytic intermediate dihydroxyacetone phosphate (DHAP) to sn-glycerol 3-phosphate (G3P), the key precursor for phospholipid synthesis. This Staphylococcus epidermidis (strain ATCC 12228 / FDA PCI 1200) protein is Glycerol-3-phosphate dehydrogenase [NAD(P)+].